The sequence spans 419 residues: L-cysteine:1D-myo-inositol 2-amino-2-deoxy-alpha-D-glucopyranoside ligase (419 aa).

Positions 1-20 are disordered; the sequence is MRSWSVPEVPALPGRGPRVH. Cys44 contacts Zn(2+). L-cysteinyl-5'-AMP is bound by residues 44–47, Thr59, and 82–84; these read CGIT and NVT. The short motif at 46-56 is the 'HIGH' region element; sequence ITPYDATHLGH. The short motif at 191-196 is the 'ERGGDP' region element; the sequence is ERGGDP. Position 232 (Trp232) interacts with L-cysteinyl-5'-AMP. Cys236 contributes to the Zn(2+) binding site. Residue 254 to 256 participates in L-cysteinyl-5'-AMP binding; sequence GSD. His261 contacts Zn(2+). Val289 serves as a coordination point for L-cysteinyl-5'-AMP. Residues 295 to 299 carry the 'KMSKS' region motif; that stretch reads KMSKS.

It belongs to the class-I aminoacyl-tRNA synthetase family. MshC subfamily. In terms of assembly, monomer. Requires Zn(2+) as cofactor.

It catalyses the reaction 1D-myo-inositol 2-amino-2-deoxy-alpha-D-glucopyranoside + L-cysteine + ATP = 1D-myo-inositol 2-(L-cysteinylamino)-2-deoxy-alpha-D-glucopyranoside + AMP + diphosphate + H(+). Its function is as follows. Catalyzes the ATP-dependent condensation of GlcN-Ins and L-cysteine to form L-Cys-GlcN-Ins. In Kineococcus radiotolerans (strain ATCC BAA-149 / DSM 14245 / SRS30216), this protein is L-cysteine:1D-myo-inositol 2-amino-2-deoxy-alpha-D-glucopyranoside ligase.